The following is a 410-amino-acid chain: Indoleamine 2,3-dioxygenase nanC (410 aa).

H309 is a heme binding site.

It belongs to the indoleamine 2,3-dioxygenase family. Requires heme as cofactor.

It catalyses the reaction D-tryptophan + O2 = N-formyl-D-kynurenine. The catalysed reaction is L-tryptophan + O2 = N-formyl-L-kynurenine. The protein operates within secondary metabolite biosynthesis. Functionally, indoleamine 2,3-dioxygenase; part of the gene cluster that mediates the biosynthesis of the benzazepine alkaloid nanangelenin A which contains an unprecedented 3,4-dihydro-1-benzazepine-2,5-dione-N-prenyl-N-acetoxy-anthranilamide scaffold. The first step of nanangelenin biosynthesis is catalyzed by the indoleamine 2,3-dioxygenase nanC which produces N-formyl-kynurenine through the catabolism of tryptophan. The two-module NRPS nanA then utilizes anthranilate (Ant) and L-kynurenine (L-Kyn) to assemble the dipeptide product nanangelenin B. The first adenylation domain of nanA (A1) loads anthranilate onto the T1 domain, while A2 loads kynurenine, generated through spontaneous nonenzymatic deformylation of the nanC-supplied N-formyl-kynurenine. The peptide bond formation between the tethered amino acids is catalyzed by the first condensation domain (C1) between anthranilate's carbonyl carbon and kynurenine's aliphatic primary amine. The second C domain (C2) catalyzes the final cyclization event between the aromatic amine of kynurenine and the tethered carbonyl carbon, yielding nanangelenin B. The terminal T3 domain enhances the catalytic efficiency of C2, suggesting the T2-tethered Ant-L-Kyn is transferred to T3 prior to cyclization by C2. Once released from nanA, nanangelenin B is then prenylated by the prenyltransferase nanD to form nanangelenin C. Nanangelenin C is then N-hydroxylated by the FAD-dependent monooxygenase nanF and further acetylated by the acetyltransferase nanB to yield nanangelenin F. Finally, the N-methyltransferase nanE methylates the amide nitrogen of 1-benzazepine to convert nanangelenin F into nanangelenin A. NanE is also able to methylate most of the intermediates of the pathway such as nanangelenin B and nanangelenin C to produce nanangelenin D and nanangelenin E, respectively. This Aspergillus nanangensis protein is Indoleamine 2,3-dioxygenase nanC.